A 220-amino-acid chain; its full sequence is Peptidoglycan hydrolase gp5 (220 aa).

It belongs to the peptidase U40 family. As to quaternary structure, monomer.

It localises to the virion. Functionally, muralytic enzyme exposed to host peptidoglycan layer after membrane fusion during viral entry. Functions as an exolysin that cleaves the peptide bridge formed by meso-diaminopimelic acid and D-alanine. Also lyses the host cell late in infection to release the virions. The polypeptide is Peptidoglycan hydrolase gp5 (P5) (Pseudomonas savastanoi pv. phaseolicola (Pseudomonas syringae pv. phaseolicola)).